Consider the following 130-residue polypeptide: MKKMLVEFRDFALKGNVLDLAVAVVIGAAFGKIVSSLVDNIIMPVVGVLLGGLDFTKLSVTVGKSVIQYGAFIQSIVDFIIIAFAIFIFVKILTSFMKKKEQPVEETPVPPTEEYLKEIRDLLKEQQKEI.

Transmembrane regions (helical) follow at residues 11-31 (FALKGNVLDLAVAVVIGAAFG) and 70-90 (GAFIQSIVDFIIIAFAIFIFV).

It belongs to the MscL family. Homopentamer.

The protein localises to the cell membrane. In terms of biological role, channel that opens in response to stretch forces in the membrane lipid bilayer. May participate in the regulation of osmotic pressure changes within the cell. The sequence is that of Large-conductance mechanosensitive channel from Listeria welshimeri serovar 6b (strain ATCC 35897 / DSM 20650 / CCUG 15529 / CIP 8149 / NCTC 11857 / SLCC 5334 / V8).